The following is a 238-amino-acid chain: Purine nucleoside phosphorylase DeoD-type (238 aa).

Position 4 (His4) interacts with a purine D-ribonucleoside. Phosphate-binding positions include Gly20, Arg24, Arg43, and 87–90 (RVGS). Residues 179 to 181 (EME) and 203 to 204 (SD) each bind a purine D-ribonucleoside. The Proton donor role is filled by Asp204.

It belongs to the PNP/UDP phosphorylase family. As to quaternary structure, homohexamer; trimer of homodimers.

The enzyme catalyses a purine D-ribonucleoside + phosphate = a purine nucleobase + alpha-D-ribose 1-phosphate. The catalysed reaction is a purine 2'-deoxy-D-ribonucleoside + phosphate = a purine nucleobase + 2-deoxy-alpha-D-ribose 1-phosphate. In terms of biological role, catalyzes the reversible phosphorolytic breakdown of the N-glycosidic bond in the beta-(deoxy)ribonucleoside molecules, with the formation of the corresponding free purine bases and pentose-1-phosphate. The chain is Purine nucleoside phosphorylase DeoD-type from Haemophilus influenzae (strain PittEE).